Here is a 271-residue protein sequence, read N- to C-terminus: Ubiquitin thioesterase OTUB1 (271 aa).

Position 2 is an N-acetylalanine (Ala-2). Ser-16 carries the phosphoserine modification. Tyr-26 bears the Phosphotyrosine; by SRC mark. One can recognise an OTU domain in the interval 80–271 (SYIRKTRPDG…RPGHYDILYK (192 aa)). Residue Asp-88 is part of the active site. The Nucleophile role is filled by Cys-91. Ubiquitin-conjugating enzyme E2 binding regions lie at residues 130–138 (FTEFTIEDF) and 169–177 (DYLVVYLRL). The segment at 189 to 195 (FFEHFIE) is free ubiquitin binding. The segment at 206–213 (QEVEPMCK) is ubiquitin-conjugating enzyme E2 binding. Free ubiquitin binding stretches follow at residues 214-221 (ESDHIHII) and 245-251 (NPHIFPE). Residue His-265 is part of the active site.

The protein belongs to the peptidase C65 family. In terms of assembly, interacts with FUS and RACK1. Interacts with UBE2D1/UBCH5A, UBE2W/UBC16 and UBE2N/UBC13. As to quaternary structure, interacts with RNF128. Forms a ternary complex with RNF128 and USP8. Interacts with the C-terminal UCH catalytic domain of USP8. Interacts with RNF128. Does not associate with USP8. Post-translationally, phosphorylation at Tyr-26 by SRC and SRMS promotes deubiquitination of RPTOR via a non-catalytic process. Isoform 1 is ubiquitous. Isoform 2 is expressed only in lymphoid tissues such as tonsils, lymph nodes and spleen, as well as peripheral blood mononuclear cells.

It localises to the cytoplasm. It carries out the reaction Thiol-dependent hydrolysis of ester, thioester, amide, peptide and isopeptide bonds formed by the C-terminal Gly of ubiquitin (a 76-residue protein attached to proteins as an intracellular targeting signal).. Its activity is regulated as follows. By free ubiquitin: binding of free ubiquitin triggers conformational changes in the OTU domain and formation of a ubiquitin-binding helix in the N-terminus, promoting binding of the conjugated donor ubiquitin in UBE2N/UBC13 to OTUB1. Functionally, hydrolase that can specifically remove 'Lys-48'-linked conjugated ubiquitin from proteins and plays an important regulatory role at the level of protein turnover by preventing degradation. Regulator of T-cell anergy, a phenomenon that occurs when T-cells are rendered unresponsive to antigen rechallenge and no longer respond to their cognate antigen. Acts via its interaction with RNF128/GRAIL, a crucial inductor of CD4 T-cell anergy. Isoform 1 destabilizes RNF128, leading to prevent anergy. In contrast, isoform 2 stabilizes RNF128 and promotes anergy. Surprisingly, it regulates RNF128-mediated ubiquitination, but does not deubiquitinate polyubiquitinated RNF128. Deubiquitinates estrogen receptor alpha (ESR1). Mediates deubiquitination of 'Lys-48'-linked polyubiquitin chains, but not 'Lys-63'-linked polyubiquitin chains. Not able to cleave di-ubiquitin. Also capable of removing NEDD8 from NEDD8 conjugates, but with a much lower preference compared to 'Lys-48'-linked ubiquitin. In terms of biological role, plays a key non-catalytic role in DNA repair regulation by inhibiting activity of RNF168, an E3 ubiquitin-protein ligase that promotes accumulation of 'Lys-63'-linked histone H2A and H2AX at DNA damage sites. Inhibits RNF168 independently of ubiquitin thioesterase activity by binding and inhibiting UBE2N/UBC13, the E2 partner of RNF168, thereby limiting spreading of 'Lys-63'-linked histone H2A and H2AX marks. Inhibition occurs by binding to free ubiquitin: free ubiquitin acts as an allosteric regulator that increases affinity for UBE2N/UBC13 and disrupts interaction with UBE2V1. The OTUB1-UBE2N/UBC13-free ubiquitin complex adopts a configuration that mimics a cleaved 'Lys48'-linked di-ubiquitin chain. Acts as a regulator of mTORC1 and mTORC2 complexes. When phosphorylated at Tyr-26, acts as an activator of the mTORC1 complex by mediating deubiquitination of RPTOR via a non-catalytic process: acts by binding and inhibiting the activity of the ubiquitin-conjugating enzyme E2 (UBE2D1/UBCH5A, UBE2W/UBC16 and UBE2N/UBC13), thereby preventing ubiquitination of RPTOR. Can also act as an inhibitor of the mTORC1 and mTORC2 complexes in response to amino acids by mediating non-catalytic deubiquitination of DEPTOR. The protein is Ubiquitin thioesterase OTUB1 (OTUB1) of Homo sapiens (Human).